Reading from the N-terminus, the 253-residue chain is Phosphoglycerate mutase 2 (253 aa).

Phosphothreonine is present on threonine 3. Substrate-binding positions include 10–17, 23–24, arginine 62, 89–92, lysine 100, and 116–117; these read RHGESLWN, CG, ERHY, and RR. The Tele-phosphohistidine intermediate role is filled by histidine 11. Serine 14 carries the phosphoserine modification. Residue glutamate 89 is the Proton donor/acceptor of the active site. At serine 118 the chain carries Phosphoserine. The residue at position 121 (threonine 121) is a Phosphothreonine. Residues tyrosine 132 and tyrosine 133 each carry the phosphotyrosine modification. Serine 135 is subject to Phosphoserine. At threonine 152 the chain carries Phosphothreonine. 187 to 188 serves as a coordination point for substrate; sequence GN.

This sequence belongs to the phosphoglycerate mutase family. BPG-dependent PGAM subfamily. As to quaternary structure, homodimer. Interacts with ENO1. Expressed in the testes (at protein level).

The catalysed reaction is (2R)-2-phosphoglycerate = (2R)-3-phosphoglycerate. The enzyme catalyses (2R)-3-phospho-glyceroyl phosphate = (2R)-2,3-bisphosphoglycerate + H(+). Its function is as follows. Interconversion of 3- and 2-phosphoglycerate with 2,3-bisphosphoglycerate as the primer of the reaction. Can also catalyze the reaction of EC 5.4.2.4 (synthase), but with a reduced activity. The sequence is that of Phosphoglycerate mutase 2 (Pgam2) from Mus musculus (Mouse).